The following is a 334-amino-acid chain: Protein-methionine-sulfoxide reductase catalytic subunit MsrP (334 aa).

Residues 1 to 44 (MKKNQFLKESDVTAESVFFMKRRQVLKALGISAAALSLPHAAHA) constitute a signal peptide (tat-type signal). Mo-molybdopterin is bound by residues Asn-88, 91–92 (YE), Cys-146, Thr-181, Asn-233, Arg-238, and 249–251 (GIK).

It belongs to the MsrP family. As to quaternary structure, heterodimer of a catalytic subunit (MsrP) and a heme-binding subunit (MsrQ). It depends on Mo-molybdopterin as a cofactor. Post-translationally, predicted to be exported by the Tat system. The position of the signal peptide cleavage has not been experimentally proven.

It is found in the periplasm. The catalysed reaction is L-methionyl-[protein] + a quinone + H2O = L-methionyl-(S)-S-oxide-[protein] + a quinol. The enzyme catalyses L-methionyl-[protein] + a quinone + H2O = L-methionyl-(R)-S-oxide-[protein] + a quinol. Part of the MsrPQ system that repairs oxidized periplasmic proteins containing methionine sulfoxide residues (Met-O), using respiratory chain electrons. Thus protects these proteins from oxidative-stress damage caused by reactive species of oxygen and chlorine generated by the host defense mechanisms. MsrPQ is essential for the maintenance of envelope integrity under bleach stress, rescuing a wide series of structurally unrelated periplasmic proteins from methionine oxidation, including the primary periplasmic chaperone SurA and the lipoprotein Pal. The catalytic subunit MsrP is non-stereospecific, being able to reduce both (R-) and (S-) diastereoisomers of methionine sulfoxide. The sequence is that of Protein-methionine-sulfoxide reductase catalytic subunit MsrP from Shigella sonnei (strain Ss046).